Reading from the N-terminus, the 78-residue chain is Major outer membrane lipoprotein Lpp (78 aa).

The first 20 residues, 1-20 (MNRTKLVLGAVILGSTLLAG), serve as a signal peptide directing secretion. C21 is lipidated: N-palmitoyl cysteine. C21 carries S-diacylglycerol cysteine lipidation. 2 consecutive repeats follow at residues 24–34 (NAKIDQLSSDV) and 38–48 (NAKVDQLSNDV). A coiled-coil region spans residues 27–75 (IDQLSSDVQTLNAKVDQLSNDVNAIRSDVQAAKDDAARANQRLDNQVRT). K78 carries the N6-murein peptidoglycan lysine modification.

It belongs to the Lpp family. Homotrimer.

The protein localises to the cell outer membrane. It localises to the secreted. Its subcellular location is the cell wall. Its function is as follows. A highly abundant outer membrane lipoprotein that controls the distance between the inner and outer membranes. The only protein known to be covalently linked to the peptidoglycan network (PGN). Also non-covalently binds the PGN. The link between the cell outer membrane and PGN contributes to maintenance of the structural and functional integrity of the cell envelope, and maintains the correct distance between the PGN and the outer membrane. The protein is Major outer membrane lipoprotein Lpp of Pectobacterium atrosepticum (strain SCRI 1043 / ATCC BAA-672) (Erwinia carotovora subsp. atroseptica).